Consider the following 1128-residue polypeptide: Inactive phospholipase C-like protein 2 (1128 aa).

The interval methionine 1–proline 129 is disordered. Alanine 2 bears the N-acetylalanine mark. Residue serine 16 is modified to Phosphoserine. A compositionally biased stretch (low complexity) spans alanine 20–glycine 30. Over residues alanine 31 to leucine 43 the composition is skewed to gly residues. Threonine 85 carries the post-translational modification Phosphothreonine. Residues asparagine 142–serine 252 form the PH domain. Residues glutamine 427–lysine 571 form the PI-PLC X-box domain. Threonine 585 bears the Phosphothreonine mark. The region spanning leucine 619–arginine 735 is the PI-PLC Y-box domain. The C2 domain maps to arginine 735–serine 864. Residues lysine 1100–aspartate 1128 are disordered. Residues glutamate 1107–aspartate 1128 are compositionally biased toward basic and acidic residues. Phosphoserine is present on serine 1114.

As to expression, ubiquitously expressed, with a strong expression in skeletal muscle.

It is found in the cytoplasm. In terms of biological role, may play an role in the regulation of Ins(1,4,5)P3 around the endoplasmic reticulum. The chain is Inactive phospholipase C-like protein 2 (Plcl2) from Mus musculus (Mouse).